A 401-amino-acid polypeptide reads, in one-letter code: MADAATEAAGLRNFTINFGPQHPAAHGVLRLVLELDGEVVERVDPHIGLLHRGTEKLIEQKTYLQAIPYFDRLDYVAPMNQEHAFCLAAEKLLGIEAPRRAQLIRVLYCEIGRILSHLLNVTTQAMDVGALTPPLWGFEEREKLMMFYERASGSRMHAAYFRIGGVHQDLPPKLIDDIDNWCDNFIQTVDDLETLLTDNRIFKQRNVDIGVVTLEQAWEWGFSGVMVRGSGAAWDLRKSQPYECYAEMDFDVPIGKNGDCYDRYCIRVEEMRQSVRIMKQCIAKMREPAGQGRVAVDDNKIFPPRRGEMKRSMESLIHHFKLYTEGFRVPAGEVYVAVEAPKGEFGVYLVSDGTNKPYKCKVRAPGFAHLQAMDFICRGHLLADVSAILGSLDIVFGEVDR.

The protein belongs to the complex I 49 kDa subunit family. In terms of assembly, NDH-1 is composed of 14 different subunits. Subunits NuoB, C, D, E, F, and G constitute the peripheral sector of the complex.

The protein resides in the cell inner membrane. It carries out the reaction a quinone + NADH + 5 H(+)(in) = a quinol + NAD(+) + 4 H(+)(out). In terms of biological role, NDH-1 shuttles electrons from NADH, via FMN and iron-sulfur (Fe-S) centers, to quinones in the respiratory chain. The immediate electron acceptor for the enzyme in this species is believed to be ubiquinone. Couples the redox reaction to proton translocation (for every two electrons transferred, four hydrogen ions are translocated across the cytoplasmic membrane), and thus conserves the redox energy in a proton gradient. The polypeptide is NADH-quinone oxidoreductase subunit D (Rhodopseudomonas palustris (strain HaA2)).